We begin with the raw amino-acid sequence, 665 residues long: Sodium/glucose cotransporter 1 (665 aa).

At 1 to 24 (MDSSTLSPAVTATDAPIPSYERIR) the chain is on the extracellular side. Residues 25 to 47 (NAADISVIVIYFVVVMAVGLWAM) form a helical membrane-spanning segment. Residues 48–66 (FSTNRGTVGGFFLAGRSMV) lie on the Cytoplasmic side of the membrane. The helical transmembrane segment at 67-90 (WWPIGASLFASNIGSGHFVGLAGT) threads the bilayer. The Extracellular segment spans residues 91–95 (GAAAG). The chain crosses the membrane as a helical span at residues 96–117 (IAMGGFEWNALVLVVVLGWIFV). The Cytoplasmic portion of the chain corresponds to 118–139 (PIYIKAGVVTMPEYLRKRFGGK). A helical transmembrane segment spans residues 140 to 169 (RIQIYLSVLSLLLYIFTKISADIFSGAIFI). Residues 170-176 (NLALGLD) lie on the Extracellular side of the membrane. The helical transmembrane segment at 177 to 193 (IYLAIFILLAITALYTI) threads the bilayer. Over 194-202 (TGGLAAVIY) the chain is Cytoplasmic. Residues 203 to 221 (TDTLQTAIMLVGSFILTGF) form a helical membrane-spanning segment. Residues 222 to 275 (AFNEVGGYEAFMDKYMKAIPTKVSNGNFTAKEECYTPRADSFHIFRDPITGDMP) are Extracellular-facing. A glycan (N-linked (GlcNAc...) asparagine) is linked at Asn-248. Cystine bridges form between Cys-255-Cys-511, Cys-255-Cys-611, Cys-345-Cys-351, Cys-355-Cys-361, and Cys-517-Cys-522. Residues 276–295 (WPGLIFGLAILALWYWCTDQ) traverse the membrane as a helical segment. At 296–309 (VIVQRCLSAKNMSH) the chain is on the cytoplasmic side. The chain crosses the membrane as a helical span at residues 310–331 (VKADCTLCGYLKLLPMFLMVMP). At 332 to 375 (GMISRILYTEKIACVLPEECQKYCGTPVGCTNIAYPTLVVELMP) the chain is on the extracellular side. The chain crosses the membrane as a helical span at residues 376–406 (NGLRGLMLSVMMASLMSSLTSIFNSASTLFT). The Cytoplasmic segment spans residues 407 to 422 (MDIYTKIRKKASEKEL). Residues 423 to 444 (MIAGRLFILVLIGISIAWVPIV) form a helical membrane-spanning segment. Over 445 to 451 (QSAQSGQ) the chain is Extracellular. A helical transmembrane segment spans residues 452 to 477 (LFDYIQSITSYLGPPIAAVFLLAIFC). Gln-457 contributes to the D-glucose binding site. Over 478 to 481 (KRVN) the chain is Cytoplasmic. The chain crosses the membrane as a helical span at residues 482–504 (EQGAFWGLILGFLIGISRMITEF). Residues 505–525 (AYGTGSCMEPSNCPKIICGVH) lie on the Extracellular side of the membrane. The chain crosses the membrane as a helical span at residues 526–547 (YLYFAIILFVISVITILIISFL). The Cytoplasmic portion of the chain corresponds to 548-645 (TKPIPDVHLY…TSEKPLWRTV (98 aa)). Position 585 is a phosphoserine (Ser-585). Thr-588 carries the phosphothreonine modification. The helical transmembrane segment at 646–663 (VNINGIILLAVAVFCHAY) threads the bilayer. The Extracellular segment spans residues 664–665 (FA).

It belongs to the sodium:solute symporter (SSF) (TC 2.A.21) family. N-glycosylation is not necessary for the cotransporter function. Expressed in enterocytes and enteroendocrine cells of small intestine (at protein level). Expressed in S3 segments of renal proximal tubules (at protein level). Expressed in endometrial glandular and epithelial cells (at protein level).

The protein resides in the apical cell membrane. The enzyme catalyses D-glucose(out) + 2 Na(+)(out) = D-glucose(in) + 2 Na(+)(in). It carries out the reaction D-galactose(out) + 2 Na(+)(out) = D-galactose(in) + 2 Na(+)(in). With respect to regulation, enhanced by the interaction with PDZK1IP1/MAP17; but unlike SLC5A2/SGLT2, PDZK1IP1 is not essential for SLC5A1 transporter activity. Possibly modulated by cholesterol binding. In terms of biological role, electrogenic Na(+)-coupled sugar symporter that actively transports D-glucose or D-galactose at the plasma membrane, with a Na(+) to sugar coupling ratio of 2:1. Transporter activity is driven by a transmembrane Na(+) electrochemical gradient set by the Na(+)/K(+) pump. Has a primary role in the transport of dietary monosaccharides from enterocytes to blood. Responsible for the absorption of D-glucose or D-galactose across the apical brush-border membrane of enterocytes, whereas basolateral exit is provided by GLUT2. Additionally, functions as a D-glucose sensor in enteroendocrine cells, triggering the secretion of the incretins GCG and GIP that control food intake and energy homeostasis. Together with SGLT2, functions in reabsorption of D-glucose from glomerular filtrate, playing a nonredundant role in the S3 segment of the proximal tubules. Transports D-glucose into endometrial epithelial cells, controlling glycogen synthesis and nutritional support for the embryo as well as the decidual transformation of endometrium prior to conception. Acts as a water channel enabling passive water transport in response to the osmotic gradient created upon sugar and Na(+) uptake. Has high water conductivity comparable to aquaporins and therefore is expected to play an important role in transepithelial water permeability, especially in the small intestine. The chain is Sodium/glucose cotransporter 1 (Slc5a1) from Mus musculus (Mouse).